The primary structure comprises 397 residues: L-asparaginase-like protein GM15681 (397 aa).

A signal peptide spans 1-22; it reads MLAQSCCLRLLILLLLFTSICS. Disulfide bonds link Cys90–Cys95, Cys189–Cys205, and Cys344–Cys371.

It belongs to the Ntn-hydrolase family.

The chain is L-asparaginase-like protein GM15681 from Drosophila sechellia (Fruit fly).